The chain runs to 608 residues: UvrABC system protein C (608 aa).

Residues 16 to 94 (NRPGVYRMFD…IKEWRPPYNI (79 aa)) form the GIY-YIG domain. The 36-residue stretch at 204–239 (NALADELNVGMEQAAMRLDFEKAAELRDQVAILRRV) folds into the UVR domain.

This sequence belongs to the UvrC family. As to quaternary structure, interacts with UvrB in an incision complex.

The protein localises to the cytoplasm. Functionally, the UvrABC repair system catalyzes the recognition and processing of DNA lesions. UvrC both incises the 5' and 3' sides of the lesion. The N-terminal half is responsible for the 3' incision and the C-terminal half is responsible for the 5' incision. This chain is UvrABC system protein C, found in Pseudomonas aeruginosa (strain ATCC 15692 / DSM 22644 / CIP 104116 / JCM 14847 / LMG 12228 / 1C / PRS 101 / PAO1).